Here is a 599-residue protein sequence, read N- to C-terminus: Elongation factor 4 (599 aa).

The tr-type G domain occupies 5–187 (KNIRNFSIIA…QLVERIPAPE (183 aa)). GTP is bound by residues 17-22 (DHGKST) and 134-137 (NKID).

This sequence belongs to the TRAFAC class translation factor GTPase superfamily. Classic translation factor GTPase family. LepA subfamily.

Its subcellular location is the cell inner membrane. It catalyses the reaction GTP + H2O = GDP + phosphate + H(+). Its function is as follows. Required for accurate and efficient protein synthesis under certain stress conditions. May act as a fidelity factor of the translation reaction, by catalyzing a one-codon backward translocation of tRNAs on improperly translocated ribosomes. Back-translocation proceeds from a post-translocation (POST) complex to a pre-translocation (PRE) complex, thus giving elongation factor G a second chance to translocate the tRNAs correctly. Binds to ribosomes in a GTP-dependent manner. This Alcanivorax borkumensis (strain ATCC 700651 / DSM 11573 / NCIMB 13689 / SK2) protein is Elongation factor 4.